We begin with the raw amino-acid sequence, 89 residues long: Large ribosomal subunit protein bL28 (89 aa).

It belongs to the bacterial ribosomal protein bL28 family.

This chain is Large ribosomal subunit protein bL28, found in Chlamydia abortus (strain DSM 27085 / S26/3) (Chlamydophila abortus).